The chain runs to 310 residues: p-hydroxybenzoic acid efflux pump subunit AaeA (310 aa).

A helical transmembrane segment spans residues 12 to 32; sequence AITLVLVILAFIAIFRAWVYY.

Belongs to the membrane fusion protein (MFP) (TC 8.A.1) family.

It localises to the cell inner membrane. In terms of biological role, forms an efflux pump with AaeB. This is p-hydroxybenzoic acid efflux pump subunit AaeA from Salmonella arizonae (strain ATCC BAA-731 / CDC346-86 / RSK2980).